The following is a 287-amino-acid chain: 4-hydroxybenzoate octaprenyltransferase (287 aa).

6 consecutive transmembrane segments (helical) span residues 41–61 (WPLL…GCAM), 89–109 (WEAI…ILPL), 133–153 (FFAI…PMAF), 158–178 (DTVP…SVAY), 202–224 (FGRF…YVWI), and 267–287 (NNWL…LAGS).

This sequence belongs to the UbiA prenyltransferase family. Requires Mg(2+) as cofactor.

The protein resides in the cell inner membrane. It catalyses the reaction all-trans-octaprenyl diphosphate + 4-hydroxybenzoate = 4-hydroxy-3-(all-trans-octaprenyl)benzoate + diphosphate. It participates in cofactor biosynthesis; ubiquinone biosynthesis. Its function is as follows. Catalyzes the prenylation of para-hydroxybenzoate (PHB) with an all-trans polyprenyl group. Mediates the second step in the final reaction sequence of ubiquinone-8 (UQ-8) biosynthesis, which is the condensation of the polyisoprenoid side chain with PHB, generating the first membrane-bound Q intermediate 3-octaprenyl-4-hydroxybenzoate. This is 4-hydroxybenzoate octaprenyltransferase from Burkholderia lata (strain ATCC 17760 / DSM 23089 / LMG 22485 / NCIMB 9086 / R18194 / 383).